The following is a 404-amino-acid chain: MKLPIYFDYSATCPVDPRVAEKMVQCMTMDGNFGNPASRSHRYGWQAEESVDNAREQIADLLNADPREIVFTSGATESDNLAIKGAAHFYEKKGKHVITCKTEHKAVLDPCRQLEREGFEVTYLEPEANGIIDLDKLQAAMREDTVLVSIMHVNNEIGVIQDIGAIGELCRARKIIFHVDAAQSAGKIPLDVKEMKVDLISMSAHKAYGPKGIGALYVRRKPRIRLEAQMHGGGHERGFRSGTLATHQIVGMGEAFAIAKQDMQKDYDHALALRERLLKGVQDLEAVTVNGDLDQRVPHNLNVSFAFVEGESLLMSLKDLAVSSGSACTSASLEPSYVLRALGLNDELAHSSVRFSFGRFTTEEEIDYAIAQIRVAVNKLRDMSPLWDMYKEGIDLNTVEWAHH.

Residues 75–76 (AT), Asn155, Gln183, and 203–205 (SAH) each bind pyridoxal 5'-phosphate. Lys206 carries the post-translational modification N6-(pyridoxal phosphate)lysine. Position 243 (Thr243) interacts with pyridoxal 5'-phosphate. Cys328 functions as the Cysteine persulfide intermediate in the catalytic mechanism. Cys328 is a binding site for [2Fe-2S] cluster.

Belongs to the class-V pyridoxal-phosphate-dependent aminotransferase family. NifS/IscS subfamily. As to quaternary structure, homodimer. Forms a heterotetramer with IscU, interacts with other sulfur acceptors. It depends on pyridoxal 5'-phosphate as a cofactor.

The protein resides in the cytoplasm. The enzyme catalyses (sulfur carrier)-H + L-cysteine = (sulfur carrier)-SH + L-alanine. It functions in the pathway cofactor biosynthesis; iron-sulfur cluster biosynthesis. Master enzyme that delivers sulfur to a number of partners involved in Fe-S cluster assembly, tRNA modification or cofactor biosynthesis. Catalyzes the removal of elemental sulfur atoms from cysteine to produce alanine. Functions as a sulfur delivery protein for Fe-S cluster synthesis onto IscU, an Fe-S scaffold assembly protein, as well as other S acceptor proteins. This is Cysteine desulfurase IscS from Vibrio atlanticus (strain LGP32) (Vibrio splendidus (strain Mel32)).